The chain runs to 393 residues: Decapping nuclease dom-3 (393 aa).

A disordered region spans residues 1–37 (MSHYGGNPRGNSSHQFGRKDFQQSDSKHIPKITGQPL). Basic and acidic residues predominate over residues 17–28 (GRKDFQQSDSKH). Substrate is bound by residues Arg-74, Glu-113, and 144 to 146 (WRG). 5 residues coordinate Mg(2+): Glu-205, Glu-257, Asp-259, Glu-269, and Leu-270. Position 257 (Glu-257) interacts with substrate. Substrate contacts are provided by Lys-271 and Gln-293.

It belongs to the DXO/Dom3Z family. Requires Mg(2+) as cofactor.

It carries out the reaction a 5'-end NAD(+)-phospho-ribonucleoside in mRNA + H2O = a 5'-end phospho-ribonucleoside in mRNA + NAD(+) + H(+). The enzyme catalyses a 5'-end (N(7)-methyl 5'-triphosphoguanosine)-ribonucleoside-ribonucleotide in mRNA + H2O = a (N(7)-methyl 5'-triphosphoguanosine)-nucleoside + a 5'-end phospho-ribonucleoside in mRNA + H(+). It catalyses the reaction a 5'-end triphospho-ribonucleoside in mRNA + H2O = a 5'-end phospho-ribonucleoside in mRNA + diphosphate + H(+). Its function is as follows. Decapping enzyme for NAD-capped RNAs: specifically hydrolyzes the nicotinamide adenine dinucleotide (NAD) cap from a subset of RNAs by removing the entire NAD moiety from the 5'-end of an NAD-capped RNA. The NAD-cap is present at the 5'-end of some RNAs and snoRNAs. In contrast to the canonical 5'-end N7 methylguanosine (m7G) cap, the NAD cap promotes mRNA decay. Also acts as a non-canonical decapping enzyme that removes the entire cap structure of m7G capped or incompletely capped RNAs and mediates their subsequent degradation. Specifically degrades pre-mRNAs with a defective 5'-end m7G cap and is part of a pre-mRNA capping quality control. Also possesses RNA 5'-pyrophosphohydrolase activity by hydrolyzing the 5'-end triphosphate to release pyrophosphates. The chain is Decapping nuclease dom-3 from Caenorhabditis elegans.